Consider the following 137-residue polypeptide: MAKELNPTENIEKLSDIQRYVTQERGTEAPFTGKLLHNKRDGVYQCLCCHQPLFISESKFDSGCGWPSFYQPIDADSIRYIDDYSHNMHRIEIRCGNCDAHLGHVFPDGPQPTGERYCINSASLNFVDDQNGEQTAG.

The region spanning 7-129 (PTENIEKLSD…NSASLNFVDD (123 aa)) is the MsrB domain. Residues C46, C49, C95, and C98 each contribute to the Zn(2+) site. The active-site Nucleophile is C118.

This sequence belongs to the MsrB Met sulfoxide reductase family. It depends on Zn(2+) as a cofactor.

It carries out the reaction L-methionyl-[protein] + [thioredoxin]-disulfide + H2O = L-methionyl-(R)-S-oxide-[protein] + [thioredoxin]-dithiol. This Yersinia pseudotuberculosis serotype O:1b (strain IP 31758) protein is Peptide methionine sulfoxide reductase MsrB.